Consider the following 103-residue polypeptide: PTS system lactose-specific EIIA component (103 aa).

Residues 1–102 (MNREEVQLLG…MKHLLEFYKR (102 aa)) form the PTS EIIA type-3 domain. His-78 (tele-phosphohistidine intermediate) is an active-site residue. Residue His-78 is modified to Phosphohistidine; by HPr. Asp-81 serves as a coordination point for Mg(2+).

In terms of assembly, homotrimer. Mg(2+) is required as a cofactor.

It localises to the cytoplasm. Functionally, the phosphoenolpyruvate-dependent sugar phosphotransferase system (sugar PTS), a major carbohydrate active transport system, catalyzes the phosphorylation of incoming sugar substrates concomitantly with their translocation across the cell membrane. The enzyme II LacEF PTS system is involved in lactose transport. In Staphylococcus aureus (strain COL), this protein is PTS system lactose-specific EIIA component.